A 427-amino-acid chain; its full sequence is Serine--tRNA ligase (427 aa).

231–233 provides a ligand contact to L-serine; it reads TAE. ATP is bound at residue 262-264; sequence RSE. An L-serine-binding site is contributed by Glu-285. 349 to 352 serves as a coordination point for ATP; it reads EISS. An L-serine-binding site is contributed by Ser-385.

This sequence belongs to the class-II aminoacyl-tRNA synthetase family. Type-1 seryl-tRNA synthetase subfamily. Homodimer. The tRNA molecule binds across the dimer.

Its subcellular location is the cytoplasm. It carries out the reaction tRNA(Ser) + L-serine + ATP = L-seryl-tRNA(Ser) + AMP + diphosphate + H(+). The catalysed reaction is tRNA(Sec) + L-serine + ATP = L-seryl-tRNA(Sec) + AMP + diphosphate + H(+). It functions in the pathway aminoacyl-tRNA biosynthesis; selenocysteinyl-tRNA(Sec) biosynthesis; L-seryl-tRNA(Sec) from L-serine and tRNA(Sec): step 1/1. Functionally, catalyzes the attachment of serine to tRNA(Ser). Is also able to aminoacylate tRNA(Sec) with serine, to form the misacylated tRNA L-seryl-tRNA(Sec), which will be further converted into selenocysteinyl-tRNA(Sec). The sequence is that of Serine--tRNA ligase from Brucella abortus (strain S19).